We begin with the raw amino-acid sequence, 209 residues long: Thiamine-phosphate synthase (209 aa).

4-amino-2-methyl-5-(diphosphooxymethyl)pyrimidine-binding positions include 41–45 (QYRNK) and asparagine 73. Mg(2+) contacts are provided by aspartate 74 and aspartate 93. Serine 112 contacts 4-amino-2-methyl-5-(diphosphooxymethyl)pyrimidine. 139 to 141 (SST) contributes to the 2-[(2R,5Z)-2-carboxy-4-methylthiazol-5(2H)-ylidene]ethyl phosphate binding site. A 4-amino-2-methyl-5-(diphosphooxymethyl)pyrimidine-binding site is contributed by lysine 142. Residue glycine 168 coordinates 2-[(2R,5Z)-2-carboxy-4-methylthiazol-5(2H)-ylidene]ethyl phosphate.

The protein belongs to the thiamine-phosphate synthase family. Mg(2+) serves as cofactor.

It carries out the reaction 2-[(2R,5Z)-2-carboxy-4-methylthiazol-5(2H)-ylidene]ethyl phosphate + 4-amino-2-methyl-5-(diphosphooxymethyl)pyrimidine + 2 H(+) = thiamine phosphate + CO2 + diphosphate. The enzyme catalyses 2-(2-carboxy-4-methylthiazol-5-yl)ethyl phosphate + 4-amino-2-methyl-5-(diphosphooxymethyl)pyrimidine + 2 H(+) = thiamine phosphate + CO2 + diphosphate. It catalyses the reaction 4-methyl-5-(2-phosphooxyethyl)-thiazole + 4-amino-2-methyl-5-(diphosphooxymethyl)pyrimidine + H(+) = thiamine phosphate + diphosphate. It functions in the pathway cofactor biosynthesis; thiamine diphosphate biosynthesis; thiamine phosphate from 4-amino-2-methyl-5-diphosphomethylpyrimidine and 4-methyl-5-(2-phosphoethyl)-thiazole: step 1/1. Its function is as follows. Condenses 4-methyl-5-(beta-hydroxyethyl)thiazole monophosphate (THZ-P) and 2-methyl-4-amino-5-hydroxymethyl pyrimidine pyrophosphate (HMP-PP) to form thiamine monophosphate (TMP). This is Thiamine-phosphate synthase from Methylobacillus flagellatus (strain ATCC 51484 / DSM 6875 / VKM B-1610 / KT).